A 554-amino-acid chain; its full sequence is MAYYRTPHDVTALPAWQALQQHRDAMQDFSMREAFAADSKRFDEFSLSCCGLFLDYSKNLINEQSRDLLVQLAEQVGLQDAIKSMFSGEIINASEGRPVLHTALRRPVGDKLSVNGVNVMPEVHKVLNQITELVGRIHDGLWRGYSEKPITDVVNIGIGGSFLGPELVSEALLPYAQRGVRCHYLANIDGSEFHELSANLRAETTLFIVSSKSFNTLETLKNAMAARTWYLAQGGSEAELYRHFIAVSSNKAAAVAFGIREENIFPMWDWVGGRYSLWSAIGLPIALAIGTANFKELLSGAYTMDQHFQTAPFEKNMPVLLALLGVWYGNFWGARSHAILPYDHYLRNITKHLQQLDMESNGKSVLTDGTPVKTDTGPVIWGGVGCNGQHAYHQLLHQGTQLIPADFIVPVVSFNPVADHHQWLYANCLSQSQALMLGKTREEAEAELRQKGLNEADIEKLAPHKVIPGNRPSNTLVVERISPRRLGALVAMYEHKVFVQSVIWGINAFDQWGVELGKELGKGVYQRIVGSLEDSAEDGSTQGLINYFRGRHRG.

Glu359 serves as the catalytic Proton donor. Catalysis depends on residues His390 and Lys518.

This sequence belongs to the GPI family.

Its subcellular location is the cytoplasm. The enzyme catalyses alpha-D-glucose 6-phosphate = beta-D-fructose 6-phosphate. The protein operates within carbohydrate biosynthesis; gluconeogenesis. It functions in the pathway carbohydrate degradation; glycolysis; D-glyceraldehyde 3-phosphate and glycerone phosphate from D-glucose: step 2/4. Catalyzes the reversible isomerization of glucose-6-phosphate to fructose-6-phosphate. The protein is Glucose-6-phosphate isomerase of Pseudomonas putida (strain W619).